The sequence spans 657 residues: Pentatricopeptide repeat-containing protein At5g44230 (657 aa).

PPR repeat units follow at residues 45 to 79 (KELL…GLDQ), 80 to 112 (SCYI…VQFR), 113 to 147 (NPFL…EITP), 148 to 178 (VSFT…TFRL), 183 to 213 (FVYV…MPER), 214 to 244 (DVIS…LPTK), 245 to 279 (DMVA…GIRA), 280 to 314 (DEVT…GYSP), 317 to 347 (HVVI…MNNK), 348 to 383 (NVFT…EIKP), 384 to 419 (NTVT…GVQP), and 420 to 450 (TRDH…MSVE). Positions 455 to 530 (VWGALLGACR…TPAVSWVVDK (76 aa)) are type E motif. The type E(+) motif stretch occupies residues 532-562 (GQMHKFFPGNLNHPMSNKIQDKLEELVERLT). The segment at 563-657 (VLGYQPDLSS…SGDCSCGDFW (95 aa)) is type DYW motif.

Belongs to the PPR family. PCMP-H subfamily.

The protein is Pentatricopeptide repeat-containing protein At5g44230 (PCMP-H17) of Arabidopsis thaliana (Mouse-ear cress).